The following is an 830-amino-acid chain: Ent-cassa-12,15-diene synthase (830 aa).

The tract at residues 1–50 (MMLLGSPSSGGYGGKFAGASPAGGTTTMAPSAKQPSSRAPPPGITGGRND) is disordered. Over residues 23–37 (GGTTTMAPSAKQPSS) the composition is skewed to polar residues. Mg(2+) is bound by residues D577, D581, N721, and E729. Positions 577–581 (DDLFD) match the DDXXD motif motif.

The protein belongs to the terpene synthase family. Requires Mg(2+) as cofactor. Expressed in roots and stems.

It carries out the reaction ent-copalyl diphosphate = ent-cassa-12,15-diene + diphosphate. Functionally, involved in phytocassane phytoalexins biosynthesis. Catalyzes the conversion of ent-copalyl diphosphate to the phytoalexin precursor ent-cassa-12,15-diene. This Oryza sativa subsp. indica (Rice) protein is Ent-cassa-12,15-diene synthase (KSL7).